Reading from the N-terminus, the 145-residue chain is Hemoglobin subunit beta (145 aa).

Positions 1–145 constitute a Globin domain; sequence MLTAEEKAAV…VANALAHRYH (145 aa). Threonine 11 is subject to Phosphothreonine. Serine 43 carries the post-translational modification Phosphoserine. At lysine 58 the chain carries N6-acetyllysine. Heme b is bound at residue histidine 62. Lysine 81 is modified (N6-acetyllysine). Histidine 91 contacts heme b. Cysteine 92 bears the S-nitrosocysteine mark.

It belongs to the globin family. Heterotetramer of two alpha chains and two beta chains. Red blood cells.

In terms of biological role, involved in oxygen transport from the lung to the various peripheral tissues. This is Hemoglobin subunit beta (HBB) from Tragelaphus strepsiceros (Greater kudu).